An 879-amino-acid polypeptide reads, in one-letter code: Alanine--tRNA ligase (879 aa).

His-566, His-570, Cys-668, and His-672 together coordinate Zn(2+).

It belongs to the class-II aminoacyl-tRNA synthetase family. Zn(2+) serves as cofactor.

The protein resides in the cytoplasm. It catalyses the reaction tRNA(Ala) + L-alanine + ATP = L-alanyl-tRNA(Ala) + AMP + diphosphate. Its function is as follows. Catalyzes the attachment of alanine to tRNA(Ala) in a two-step reaction: alanine is first activated by ATP to form Ala-AMP and then transferred to the acceptor end of tRNA(Ala). Also edits incorrectly charged Ser-tRNA(Ala) and Gly-tRNA(Ala) via its editing domain. The protein is Alanine--tRNA ligase of Clostridium botulinum (strain Alaska E43 / Type E3).